The chain runs to 118 residues: UPF0342 protein ABC1519 (118 aa).

This sequence belongs to the UPF0342 family.

In Shouchella clausii (strain KSM-K16) (Alkalihalobacillus clausii), this protein is UPF0342 protein ABC1519.